Reading from the N-terminus, the 138-residue chain is Ribosome-binding factor A (138 aa).

Belongs to the RbfA family. In terms of assembly, monomer. Binds 30S ribosomal subunits, but not 50S ribosomal subunits or 70S ribosomes.

The protein resides in the cytoplasm. One of several proteins that assist in the late maturation steps of the functional core of the 30S ribosomal subunit. Associates with free 30S ribosomal subunits (but not with 30S subunits that are part of 70S ribosomes or polysomes). Required for efficient processing of 16S rRNA. May interact with the 5'-terminal helix region of 16S rRNA. In Sodalis glossinidius (strain morsitans), this protein is Ribosome-binding factor A.